We begin with the raw amino-acid sequence, 120 residues long: Ribonuclease P protein component (120 aa).

Belongs to the RnpA family. In terms of assembly, consists of a catalytic RNA component (M1 or rnpB) and a protein subunit.

It carries out the reaction Endonucleolytic cleavage of RNA, removing 5'-extranucleotides from tRNA precursor.. In terms of biological role, RNaseP catalyzes the removal of the 5'-leader sequence from pre-tRNA to produce the mature 5'-terminus. It can also cleave other RNA substrates such as 4.5S RNA. The protein component plays an auxiliary but essential role in vivo by binding to the 5'-leader sequence and broadening the substrate specificity of the ribozyme. The chain is Ribonuclease P protein component from Pseudoalteromonas atlantica (strain T6c / ATCC BAA-1087).